The primary structure comprises 370 residues: A-type ATP synthase subunit C (370 aa).

The protein belongs to the V-ATPase V0D/AC39 subunit family. Has multiple subunits with at least A(3), B(3), C, D, E, F, H, I and proteolipid K(x).

Its subcellular location is the cell membrane. In terms of biological role, component of the A-type ATP synthase that produces ATP from ADP in the presence of a proton gradient across the membrane. In Pyrococcus abyssi (strain GE5 / Orsay), this protein is A-type ATP synthase subunit C.